The chain runs to 925 residues: MGSGPIDPKELLKGLDSFLNRDGEVKSVDGISKIFSLMKEARKMVSRCTYLNILLQTRSPEILVKFIDVGGYKLLNNWLTYSKTTNNIPLLQQILLTLQHLPLTVDHLKQNNTAKLVKQLSKSSEDEELRKLASVLVSDWMAVIRSQSSTQPAEKDKKKRKEEGKSRTTPPERPLTEVKAETRAEEAPEKKREKPKSLRTTAPSHAKFRSTGLELETPSLVPVKKNASAVVVSDKYNLKPIPLKRQSSIAALGDAAPPAEKKYKPLNTTPNATKEIKVKIIPPQPMEGLGFLDALNSAPVPGIKIKKKKKVLSPTAAKPSPFEGKTSTEPSTAKPSSPEPAPPSEAMDTDRPGTPVPPVEVPELMDTASLEPGALDAKPVESPGDPSQLTRKGRKRKTVTWPEEGKLREYFYFELDETERVNVNKIKDFGEAAKREILSDRHAFETARRLSHDNMEEKVPWVCPRPLVLPSPLVTPGSNSQERYIQAEREKGILQELFLNKESPHEPDPEPYEPVPPKLIPLDEECSMDETPYVETLEPGGAGGSPDGAGGSKLPPVLANLMGSMGAGKSPQGPGGGGINVQEILTSIMGSPNSHPSEELLKQPDYSDKIKQMLVPHGLLGPGPIANGFPPGGPGGPKGMQHFPPGPGGPMPGPHGGPGGPGGPVGPRLLGPPPPPRGGDPFWDGPGDPMRGGPMRGGPGPGPGPYHRGRGGRGGNEPPPPPPPFRGARGGRSGGGPPNGRGGPGGGMVGGGGHRPHEGPGGGMSSGSGHRPHEGPGGGMGGGHRPHEGPGGGMGGGHRPHEGPGGGMGGGSGHRPHEGPGGGMGAGGGHRPHEGPGHGGPHGHRPHDVPGHRGHDHRGPPPHEHRGHDGPGHGGGGHRGHDGGHNHGGDMSKRPVCRHFMMKGNCRYENNCAFYHPGVNGPPLP.

The interval 1-348 is interaction with TOX4; it reads MGSGPIDPKE…EPAPPSEAMD (348 aa). The region spanning 73–147 is the TFIIS N-terminal domain; the sequence is KLLNNWLTYS…SDWMAVIRSQ (75 aa). Residues 147–211 are disordered; the sequence is QSSTQPAEKD…APSHAKFRST (65 aa). Composition is skewed to basic and acidic residues over residues 153–166 and 174–196; these read AEKD…EGKS and PLTE…EKPK. Residues Lys-179 and Lys-262 each participate in a glycyl lysine isopeptide (Lys-Gly) (interchain with G-Cter in SUMO2) cross-link. 3 disordered regions span residues 304 to 398, 536 to 555, and 587 to 890; these read KIKK…KRKT, TLEP…SKLP, and SIMG…HGGD. Ser-313 is subject to Phosphoserine. Low complexity predominate over residues 325–336; it reads KTSTEPSTAKPS. The necessary for interaction with PPP1CA stretch occupies residues 357–433; that stretch reads PPVEVPELMD…NKIKDFGEAA (77 aa). Ser-382 is subject to Phosphoserine. The tract at residues 393–408 is necessary for interaction with PPP1CC; it reads GRKRKTVTWPEEGKLR. A PP1-binding motif motif is present at residues 394–423; the sequence is RKRKTVTWPEEGKLREYFYFELDETERVNV. Thr-398 carries the phosphothreonine; by PKA modification. The tract at residues 418-619 is interaction with WDR82; that stretch reads TERVNVNKIK…IKQMLVPHGL (202 aa). Over residues 540-551 the composition is skewed to gly residues; it reads GGAGGSPDGAGG. Residues Ser-545 and Ser-591 each carry the phosphoserine modification. Basic and acidic residues predominate over residues 596-611; the sequence is PSEELLKQPDYSDKIK. Over residues 644–655 the composition is skewed to pro residues; that stretch reads PPGPGGPMPGPH. Residues 656–665 show a composition bias toward gly residues; that stretch reads GGPGGPGGPV. Arg-668 is subject to Omega-N-methylarginine. Low complexity predominate over residues 679–693; it reads GDPFWDGPGDPMRGG. Omega-N-methylarginine is present on residues Arg-696 and Arg-741. Gly residues-rich tracts occupy residues 728–766 and 775–829; these read ARGG…GMSS and GPGG…AGGG. Basic and acidic residues-rich tracts occupy residues 846–871 and 879–890; these read PHDV…HDGP and RGHDGGHNHGGD. The segment at 891 to 919 adopts a C3H1-type zinc-finger fold; it reads MSKRPVCRHFMMKGNCRYENNCAFYHPGV.

Component of the PNUTS-PP1 complex (also named PTW/PP1 complex), composed of PPP1R10/PNUTS, TOX4, WDR82, and PPP1CA (or PPP1CB or PPP1CC). Post-translationally, phosphorylated on Ser-398 by PKA within the region necessary for interaction with PPP1CA.

The protein resides in the nucleus. Its subcellular location is the chromosome. In terms of biological role, substrate-recognition component of the PNUTS-PP1 protein phosphatase complex, a protein phosphatase 1 (PP1) complex that promotes RNA polymerase II transcription pause-release, allowing transcription elongation. Promoter-proximal pausing by RNA polymerase II is a transcription halt following transcription initiation but prior to elongation, which acts as a checkpoint to control that transcripts are favorably configured for transcriptional elongation. The PNUTS-PP1 complex mediates the release of RNA polymerase II from promoter-proximal region of genes by catalyzing dephosphorylation of proteins involved in transcription, such as AFF4, CDK9, MEPCE, INTS12, NCBP1, POLR2M/GDOWN1 and SUPT6H. The PNUTS-PP1 complex also regulates RNA polymerase II transcription termination by mediating dephosphorylation of SUPT5H in termination zones downstream of poly(A) sites, thereby promoting deceleration of RNA polymerase II transcription. PNUTS-PP1 complex is also involved in the response to replication stress by mediating dephosphorylation of POLR2A at 'Ser-5' of the CTD, promoting RNA polymerase II degradation. The PNUTS-PP1 complex also plays a role in the control of chromatin structure and cell cycle progression during the transition from mitosis into interphase. PNUTS-PP1 complex mediates dephosphorylation of MYC, promoting MYC stability by preventing MYC ubiquitination by the SCF(FBXW7) complex. In addition to acts as a substrate-recognition component, PPP1R10/PNUTS also acts as a nuclear targeting subunit for the PNUTS-PP1 complex. In some context, PPP1R10/PNUTS also acts as an inhibitor of protein phosphatase 1 (PP1) activity by preventing access to substrates, such as RB. The chain is Serine/threonine-protein phosphatase 1 regulatory subunit 10 (PPP1R10) from Sus scrofa (Pig).